A 630-amino-acid polypeptide reads, in one-letter code: tRNA uridine 5-carboxymethylaminomethyl modification enzyme MnmG (630 aa).

Residue 13–18 (GGGHAG) coordinates FAD. Position 273–287 (273–287 (GPRYCPSIEDKIHRF)) interacts with NAD(+).

This sequence belongs to the MnmG family. In terms of assembly, homodimer. Heterotetramer of two MnmE and two MnmG subunits. Requires FAD as cofactor.

The protein localises to the cytoplasm. In terms of biological role, NAD-binding protein involved in the addition of a carboxymethylaminomethyl (cmnm) group at the wobble position (U34) of certain tRNAs, forming tRNA-cmnm(5)s(2)U34. This Pseudomonas putida (Arthrobacter siderocapsulatus) protein is tRNA uridine 5-carboxymethylaminomethyl modification enzyme MnmG.